Consider the following 131-residue polypeptide: Transcription antitermination protein NusB (131 aa).

This sequence belongs to the NusB family.

Functionally, involved in transcription antitermination. Required for transcription of ribosomal RNA (rRNA) genes. Binds specifically to the boxA antiterminator sequence of the ribosomal RNA (rrn) operons. This chain is Transcription antitermination protein NusB, found in Aliarcobacter butzleri (strain RM4018) (Arcobacter butzleri).